The following is a 289-amino-acid chain: Probable endonuclease 4 (289 aa).

Zn(2+)-binding residues include His75, His115, Glu153, Asp187, His190, His224, Asp237, His239, and Glu269.

This sequence belongs to the AP endonuclease 2 family. It depends on Zn(2+) as a cofactor.

It carries out the reaction Endonucleolytic cleavage to 5'-phosphooligonucleotide end-products.. Functionally, endonuclease IV plays a role in DNA repair. It cleaves phosphodiester bonds at apurinic or apyrimidinic (AP) sites, generating a 3'-hydroxyl group and a 5'-terminal sugar phosphate. The chain is Probable endonuclease 4 from Chlamydia caviae (strain ATCC VR-813 / DSM 19441 / 03DC25 / GPIC) (Chlamydophila caviae).